The primary structure comprises 811 residues: Myb-like DNA-binding protein BAS1 (811 aa).

Positions 34 to 110 (HRKNGRNSWS…DVRKRWTGSL (77 aa)) constitute a Myb-like domain. HTH myb-type domains are found at residues 111 to 165 (DPNL…GPGS) and 166 to 218 (KGRL…TMVV). 2 consecutive DNA-binding regions (H-T-H motif) follow at residues 138-161 (WLSI…IEVL) and 191-214 (WRKI…RKII). Residues 237-264 (DMTDGKLRQHPIADSDIRSDSTPNKEEQ) show a composition bias toward basic and acidic residues. Disordered regions lie at residues 237–320 (DMTD…SAPP), 348–379 (SQMN…DEHM), 535–713 (ATSH…LRDE), and 782–811 (LHNE…LNPS). Low complexity predominate over residues 265-275 (LQLSQQNNPSL). Positions 282-298 (NVKENESSKLPRLKDND) are enriched in basic and acidic residues. Polar residues-rich tracts occupy residues 348 to 366 (SQMN…QTSL), 535 to 613 (ATSH…TSGS), and 653 to 664 (LNPSPNSVRSNG). Residues 782 to 794 (LHNEAKKTSEHDM) are compositionally biased toward basic and acidic residues.

In terms of assembly, monomer.

The protein localises to the nucleus. Activates HIS4 transcription only in combination with PHO2/BAS2. BAS1 is also involved in the regulation of the purine biosynthesis pathway. This Saccharomyces cerevisiae (strain ATCC 204508 / S288c) (Baker's yeast) protein is Myb-like DNA-binding protein BAS1 (BAS1).